The chain runs to 138 residues: Basic phospholipase A2 BP-II (138 aa).

A signal peptide spans 1 to 16; that stretch reads MRTLWIMAVLLVGVDG. Cystine bridges form between cysteine 42/cysteine 132, cysteine 44/cysteine 60, cysteine 59/cysteine 112, cysteine 65/cysteine 138, cysteine 66/cysteine 105, cysteine 73/cysteine 98, and cysteine 91/cysteine 103. Glycine 45 and glycine 47 together coordinate Ca(2+). Histidine 63 is a catalytic residue. Aspartate 106 is an active-site residue.

Belongs to the phospholipase A2 family. Group II subfamily. K49 sub-subfamily. In terms of assembly, exists as a monomer in both solution and crystal states. In the presence of SDS or probably in the presence of phospholipids, assembles to form SDS-resistant stable oligomers. Ca(2+) serves as cofactor. In terms of tissue distribution, expressed by the venom gland.

It is found in the secreted. It catalyses the reaction a 1,2-diacyl-sn-glycero-3-phosphocholine + H2O = a 1-acyl-sn-glycero-3-phosphocholine + a fatty acid + H(+). Functionally, snake venom phospholipase A2 (PLA2) that shows anticoagulant activities, strong myolytic activity, infiltration of polymorphonuclear cells, and edema in stromal tissues. Induces cell death of Jurkat cells in a concentration-dependent manner. Shows a low phospholipase A2 activity. PLA2 catalyzes the calcium-dependent hydrolysis of the 2-acyl groups in 3-sn-phosphoglycerides. The polypeptide is Basic phospholipase A2 BP-II (Protobothrops flavoviridis (Habu)).